Reading from the N-terminus, the 1368-residue chain is DNA-directed RNA polymerase subunit beta (1368 aa).

This sequence belongs to the RNA polymerase beta chain family. As to quaternary structure, the RNAP catalytic core consists of 2 alpha, 1 beta, 1 beta' and 1 omega subunit. When a sigma factor is associated with the core the holoenzyme is formed, which can initiate transcription.

It catalyses the reaction RNA(n) + a ribonucleoside 5'-triphosphate = RNA(n+1) + diphosphate. Functionally, DNA-dependent RNA polymerase catalyzes the transcription of DNA into RNA using the four ribonucleoside triphosphates as substrates. The protein is DNA-directed RNA polymerase subunit beta of Paraburkholderia phytofirmans (strain DSM 17436 / LMG 22146 / PsJN) (Burkholderia phytofirmans).